The primary structure comprises 132 residues: Small ribosomal subunit protein uS8 (132 aa).

This sequence belongs to the universal ribosomal protein uS8 family. As to quaternary structure, part of the 30S ribosomal subunit. Contacts proteins S5 and S12.

Functionally, one of the primary rRNA binding proteins, it binds directly to 16S rRNA central domain where it helps coordinate assembly of the platform of the 30S subunit. The protein is Small ribosomal subunit protein uS8 of Lactobacillus helveticus (strain DPC 4571).